Here is a 324-residue protein sequence, read N- to C-terminus: tRNA dimethylallyltransferase (324 aa).

17–24 (GPTASGKT) contacts ATP. 19–24 (TASGKT) contributes to the substrate binding site. Interaction with substrate tRNA regions lie at residues 42-45 (DSAL), 166-170 (QRIQR), and 251-256 (RCVGYR).

The protein belongs to the IPP transferase family. Monomer. Mg(2+) is required as a cofactor.

The catalysed reaction is adenosine(37) in tRNA + dimethylallyl diphosphate = N(6)-dimethylallyladenosine(37) in tRNA + diphosphate. In terms of biological role, catalyzes the transfer of a dimethylallyl group onto the adenine at position 37 in tRNAs that read codons beginning with uridine, leading to the formation of N6-(dimethylallyl)adenosine (i(6)A). The protein is tRNA dimethylallyltransferase of Burkholderia pseudomallei (strain 1106a).